We begin with the raw amino-acid sequence, 931 residues long: Isoleucine--tRNA ligase (931 aa).

Residues 58 to 68 (PYANGHLHCGH) carry the 'HIGH' region motif. Residue Glu559 coordinates L-isoleucyl-5'-AMP. Residues 600–604 (KLSKS) carry the 'KMSKS' region motif. Lys603 serves as a coordination point for ATP. Residues Cys894, Cys897, Cys914, and Cys917 each coordinate Zn(2+).

Belongs to the class-I aminoacyl-tRNA synthetase family. IleS type 1 subfamily. In terms of assembly, monomer. Requires Zn(2+) as cofactor.

It localises to the cytoplasm. The catalysed reaction is tRNA(Ile) + L-isoleucine + ATP = L-isoleucyl-tRNA(Ile) + AMP + diphosphate. Its function is as follows. Catalyzes the attachment of isoleucine to tRNA(Ile). As IleRS can inadvertently accommodate and process structurally similar amino acids such as valine, to avoid such errors it has two additional distinct tRNA(Ile)-dependent editing activities. One activity is designated as 'pretransfer' editing and involves the hydrolysis of activated Val-AMP. The other activity is designated 'posttransfer' editing and involves deacylation of mischarged Val-tRNA(Ile). The polypeptide is Isoleucine--tRNA ligase (Legionella pneumophila (strain Lens)).